Here is a 512-residue protein sequence, read N- to C-terminus: Polyamine oxidase 1 (512 aa).

Residues E38 and R46 each contribute to the FAD site. Positions 448-470 (DRMAEPLPRGPDAAADERPPSPR) are disordered. E476 is an FAD binding site.

It belongs to the flavin monoamine oxidase family. The cofactor is FAD.

It is found in the cytoplasm. It catalyses the reaction spermine + O2 + H2O = 3-aminopropanal + spermidine + H2O2. The catalysed reaction is N(1)-acetylspermine + O2 + H2O = 3-acetamidopropanal + spermidine + H2O2. The enzyme catalyses norspermine + O2 + H2O = norspermidine + 3-aminopropanal + H2O2. It carries out the reaction thermospermine + O2 + H2O = 3-aminopropanal + spermidine + H2O2. The protein operates within amine and polyamine degradation; spermine degradation. Functionally, flavoenzyme involved in polyamine back-conversion. Catalyzes the oxidation of the secondary amino group of polyamines, such as spermine and its acetyl derivatives. Substrate preference is thermospermine &gt; spermine &gt; norspermine &gt; N(1)-acetylspermine. No activity detected when putrescine or spermidine are used as substrates. Plays an important role in the regulation of polyamine intracellular concentration. In Oryza sativa subsp. japonica (Rice), this protein is Polyamine oxidase 1.